A 1277-amino-acid polypeptide reads, in one-letter code: DNA repair protein RAD5B (1277 aa).

The disordered stretch occupies residues 271-293 (KLEQENDDLFSSGDSDGTSAKRR). In terms of domain architecture, Helicase ATP-binding spans 674–871 (PTATQMARGG…YSLLCFLHVE (198 aa)). Position 687 to 694 (687 to 694 (DAMGLGKT)) interacts with ATP. The DEAH box signature appears at 822–825 (DEAH). Residues 1040–1080 (CPICLESADDPVLTPCAHRMCRECLLTSWRSPSCGLCPICR) form an RING-type zinc finger. One can recognise a Helicase C-terminal domain in the interval 1113-1277 (ELLKCLEKIK…RLEELKMLFR (165 aa)).

This sequence belongs to the SNF2/RAD54 helicase family. RAD16 subfamily.

Its subcellular location is the nucleus. Its function is as follows. Possesses intrinsic ATP-dependent nucleosome-remodeling activity. This activity may be required for DNA repair. Does not seem to be required for DNA repair and regulation of homologous recombination (HR). This is DNA repair protein RAD5B from Arabidopsis thaliana (Mouse-ear cress).